The sequence spans 288 residues: Pyridoxal kinase PdxY (288 aa).

Residues Ser-9 and 44-45 (TQ) each bind substrate. Asp-111, Glu-148, and Lys-181 together coordinate ATP. Asp-224 is a substrate binding site.

This sequence belongs to the pyridoxine kinase family. PdxY subfamily. Homodimer. Mg(2+) serves as cofactor.

The enzyme catalyses pyridoxal + ATP = pyridoxal 5'-phosphate + ADP + H(+). The protein operates within cofactor metabolism; pyridoxal 5'-phosphate salvage; pyridoxal 5'-phosphate from pyridoxal: step 1/1. In terms of biological role, pyridoxal kinase involved in the salvage pathway of pyridoxal 5'-phosphate (PLP). Catalyzes the phosphorylation of pyridoxal to PLP. The polypeptide is Pyridoxal kinase PdxY (Haemophilus influenzae (strain ATCC 51907 / DSM 11121 / KW20 / Rd)).